The chain runs to 495 residues: MASENTTETPSVPAGGPLAARISRPEGDANPPSTEAEKPAAEDDSGKGPSIPQVDGASEDQRGSELQDSEFDVNVKLSDLQADPNNPLYSIKSFEELGLAEPIQMGLSKMNFRRPSKIQERALPLLMANPPTNMIAQSQSGTGKTAAFVLNILSRLELTPEKQKSPQALVLAPSRELARQIVGVIQAMGTFVEGLFVATAVPMEMNRNQRVEASIVVGTPGTVQDLIKKRLFNTQHLRVLVLDEADNMLDQQGLGDQCIRVKSLLPRTIQVVLFSATFPDFVVRYAHKFAPNSNQLTLKHEELTVEGIKQLYLDCESDEHKYEILVKFYGLLTIGSSIIFVKTRASAAEIERRMVAEGHTVVSLTGGIEGQKRDEIIDRFRNGTAKVLITTNVLARGIDVSTVSMVINYDIPELHLPGAARRMADAQTYLHRIGRTGRFGRVGVAVSFVSNQEEWQMLQDIQKYFSTNIERVDTRDWDDVEKKVKKIIKPSAVAR.

The span at 1–10 (MASENTTETP) shows a compositional bias: polar residues. Residues 1–68 (MASENTTETP…EDQRGSELQD (68 aa)) form a disordered region. The segment covering 35-46 (EAEKPAAEDDSG) has biased composition (basic and acidic residues). A Q motif motif is present at residues 92–120 (KSFEELGLAEPIQMGLSKMNFRRPSKIQE). Positions 125 to 296 (LLMANPPTNM…HKFAPNSNQL (172 aa)) constitute a Helicase ATP-binding domain. 138 to 145 (SQSGTGKT) provides a ligand contact to ATP. Positions 243–246 (DEAD) match the DEAD box motif. One can recognise a Helicase C-terminal domain in the interval 307 to 488 (GIKQLYLDCE…DVEKKVKKII (182 aa)).

Belongs to the DEAD box helicase family. DDX19/DBP5 subfamily. As to quaternary structure, associates with the nuclear pore complex.

The protein resides in the cytoplasm. It is found in the nucleus. The protein localises to the nuclear pore complex. It localises to the nucleus membrane. The catalysed reaction is ATP + H2O = ADP + phosphate + H(+). ATP-dependent RNA helicase associated with the nuclear pore complex and essential for mRNA export from the nucleus. May participate in a terminal step of mRNA export through the removal of proteins that accompany mRNA through the nucleopore complex. May also be involved in early transcription. The protein is ATP-dependent RNA helicase DBP5 (DBP5) of Coccidioides immitis (strain RS) (Valley fever fungus).